We begin with the raw amino-acid sequence, 277 residues long: Large ribosomal subunit protein uL2 (277 aa).

The disordered stretch occupies residues 222 to 277 (GVAMNPVDHPHGGGEGRTSGGRHPVTPWGKPTKGKKTRSNKATDKFIMRSRHQRKK).

This sequence belongs to the universal ribosomal protein uL2 family. Part of the 50S ribosomal subunit. Forms a bridge to the 30S subunit in the 70S ribosome.

Functionally, one of the primary rRNA binding proteins. Required for association of the 30S and 50S subunits to form the 70S ribosome, for tRNA binding and peptide bond formation. It has been suggested to have peptidyltransferase activity; this is somewhat controversial. Makes several contacts with the 16S rRNA in the 70S ribosome. The polypeptide is Large ribosomal subunit protein uL2 (Brucella ovis (strain ATCC 25840 / 63/290 / NCTC 10512)).